Reading from the N-terminus, the 338-residue chain is Flap endonuclease 1 (338 aa).

The tract at residues 1 to 98 (MGVNLSSILI…ETLRERSLIK (98 aa)) is N-domain. Mg(2+) contacts are provided by D27, D80, E152, E154, D173, D175, and D236. Residues 116 to 257 (KIRSLSSRIN…TALSLIKKYN (142 aa)) form an I-domain region. Residues 330–338 (HQSSLDRFF) are interaction with PCNA.

The protein belongs to the XPG/RAD2 endonuclease family. FEN1 subfamily. As to quaternary structure, interacts with PCNA. PCNA stimulates the nuclease activity without altering cleavage specificity. Mg(2+) serves as cofactor.

In terms of biological role, structure-specific nuclease with 5'-flap endonuclease and 5'-3' exonuclease activities involved in DNA replication and repair. During DNA replication, cleaves the 5'-overhanging flap structure that is generated by displacement synthesis when DNA polymerase encounters the 5'-end of a downstream Okazaki fragment. Binds the unpaired 3'-DNA end and kinks the DNA to facilitate 5' cleavage specificity. Cleaves one nucleotide into the double-stranded DNA from the junction in flap DNA, leaving a nick for ligation. Also involved in the base excision repair (BER) pathway. Acts as a genome stabilization factor that prevents flaps from equilibrating into structures that lead to duplications and deletions. Also possesses 5'-3' exonuclease activity on nicked or gapped double-stranded DNA. The sequence is that of Flap endonuclease 1 from Picrophilus torridus (strain ATCC 700027 / DSM 9790 / JCM 10055 / NBRC 100828 / KAW 2/3).